Consider the following 478-residue polypeptide: uncharacterized protein (478 aa).

Positions M1 to A19 are cleaved as a signal peptide. The Lumenal portion of the chain corresponds to S20–Q214. Residues I215–I235 form a helical membrane-spanning segment. Over C236–K240 the chain is Cytoplasmic. The chain crosses the membrane as a helical span at residues L241–V261. Over K262–D289 the chain is Lumenal. Residues G290–I310 traverse the membrane as a helical segment. Topologically, residues R311 to M317 are cytoplasmic. Residues V318 to V338 traverse the membrane as a helical segment. The Lumenal portion of the chain corresponds to Y339–V356. The helical transmembrane segment at W357–F377 threads the bilayer. Residues R378 to W391 lie on the Cytoplasmic side of the membrane. Residues N392–F412 traverse the membrane as a helical segment. Residues D413–E427 are Lumenal-facing. Residues Y428–Y448 form a helical membrane-spanning segment. Residues S449–F478 are Cytoplasmic-facing.

The protein resides in the endoplasmic reticulum membrane. Its subcellular location is the golgi apparatus membrane. This is an uncharacterized protein from Schizosaccharomyces pombe (strain 972 / ATCC 24843) (Fission yeast).